A 428-amino-acid polypeptide reads, in one-letter code: MDTIYALASARGKAGVAVLRLSGPRSHEAVQAFGVLLPPLRHAALRRLTWNDEVLDEALVLLFGAGASFTGETSAELHLHGSPAAVSSVLRVLSGLPGLRAAEAGEFTRRALENGRLDLAQVEGLADLIDAETEAQRRQAMRVFSGAIGERAERWRADLIRAAALLEATIDFADEDVPVDVTPEVLTLIDGLLADLRREVDGSRIAERIRDGFEVAIVGAPNAGKSTLLNALARREAAITSEIAGTTRDVIEVRMDLDGLPVTFLDTAGLRDTSDLVESLGIERAVTRAKAADLRVFLLDDSGPLPGITVQADDLVVQGKADLRPGHGLRLSGRTGEGVPELVAAIGERLLGRTAGAGSLTRERHRLAIERAIGAMESVRAELLRGQQHTELAADDLRRAIRSLDSLVGRVDVESLLGEIFASFCIGK.

The (6S)-5-formyl-5,6,7,8-tetrahydrofolate site is built by arginine 20, glutamate 76, and arginine 116. One can recognise a TrmE-type G domain in the interval 212 to 351 (GFEVAIVGAP…LVAAIGERLL (140 aa)). Asparagine 222 lines the K(+) pocket. GTP is bound by residues 222–227 (NAGKST), 241–247 (SEIAGTT), and 266–269 (DTAG). Serine 226 is a Mg(2+) binding site. 3 residues coordinate K(+): serine 241, isoleucine 243, and threonine 246. Threonine 247 is a Mg(2+) binding site. Position 428 (lysine 428) interacts with (6S)-5-formyl-5,6,7,8-tetrahydrofolate.

The protein belongs to the TRAFAC class TrmE-Era-EngA-EngB-Septin-like GTPase superfamily. TrmE GTPase family. In terms of assembly, homodimer. Heterotetramer of two MnmE and two MnmG subunits. K(+) is required as a cofactor.

Its subcellular location is the cytoplasm. Functionally, exhibits a very high intrinsic GTPase hydrolysis rate. Involved in the addition of a carboxymethylaminomethyl (cmnm) group at the wobble position (U34) of certain tRNAs, forming tRNA-cmnm(5)s(2)U34. The sequence is that of tRNA modification GTPase MnmE from Cereibacter sphaeroides (strain ATCC 17029 / ATH 2.4.9) (Rhodobacter sphaeroides).